A 581-amino-acid polypeptide reads, in one-letter code: Pre-mRNA 3'-end-processing factor FIP1 (581 aa).

2 stretches are compositionally biased toward basic and acidic residues: residues 1-10 (MSAGEVERLV) and 32-42 (VHVHSDLAKDL). Disordered regions lie at residues 1-95 (MSAG…EDDV), 211-282 (TVQQ…ESPD), and 320-581 (RSAT…APAE). A sufficient for interaction with PAPOLA region spans residues 1–110 (MSAGEVERLV…DIKTGAPQYG (110 aa)). Residues 1-332 (MSAGEVERLV…TEVDNNFSKP (332 aa)) are necessary for stimulating PAPOLA activity. Composition is skewed to acidic residues over residues 43 to 54 (DENEVERPEEEN) and 80 to 94 (TEDD…DEDD). Residues serine 84, serine 86, and serine 88 each carry the phosphoserine modification. The sufficient for interaction with CPSF4 stretch occupies residues 136–219 (KGVDLDAPGS…ITVQQGRTGN (84 aa)). The span at 247–267 (SRNSTSSQSQTSTASRKASSS) shows a compositional bias: low complexity. Basic and acidic residues predominate over residues 271-282 (WQDRYGRAESPD). Residue serine 280 is modified to Phosphoserine. Residues 320–330 (RSATEVDNNFS) are compositionally biased toward polar residues. A compositionally biased stretch (pro residues) spans 331-389 (KPPPFFPPGAPPTHLPPPPFLPPPPTVSTAPPLIPPPGIPITVPPPGFPPPPGAPPPSL). Phosphotyrosine is present on tyrosine 411. Positions 419–435 (LTSSAPSWPSLVDTTKQ) are enriched in polar residues. Residues 428–581 (SLVDTTKQWD…QESTEAAPAE (154 aa)) form a sufficient for interaction with CPSF1 and CSTF3 region. Over residues 439-479 (YARREKDRDRDRERDRDRERERDRDRERERTRERERERDHS) the composition is skewed to basic and acidic residues. The arg/Asp/Glu-rich domain stretch occupies residues 442-477 (REKDRDRDRERDRDRERERDRDRERERTRERERERD). Residues 478-535 (HSPTPSVFNSDEERYRYREYAERGYERHRASREKEERHRERRHREKEETRHKSSRSNS) are sufficient for interaction with AHCYL1. Serine 479 carries the phosphoserine modification. At threonine 481 the chain carries Phosphothreonine. A phosphoserine mark is found at serine 483 and serine 487. Over residues 488–515 (DEERYRYREYAERGYERHRASREKEERH) the composition is skewed to basic and acidic residues. Residues 529–538 (KSSRSNSRRR) show a composition bias toward basic residues. Position 541 is a phosphoserine (serine 541). Residues 547-557 (HRRHKHKKSKR) are compositionally biased toward basic residues.

Belongs to the FIP1 family. In terms of assembly, component of the cleavage and polyadenylation specificity factor (CPSF) complex, composed of CPSF1, CPSF2, CPSF3, CPSF4 and FIP1L1. Found in a complex with CPSF1, FIP1L1 and PAPOLA. Interacts with CPSF1, CPSF4, CSTF2 and CSTF3. Interacts with AHCYL1 (when phosphorylated); the interaction is direct and associates AHCYL1 with the CPSF complex and RNA. Interacts with PAPOLA; the interaction seems to be increased by the interaction with AHCYL1. Interacts with NUDT21/CPSF5; this interaction occurs in a RNA sequence-specific manner. Interacts (preferentially via unphosphorylated form and Arg/Glu/Asp-rich domain) with CPSF6 (via Arg/Ser-rich domain); this interaction mediates, at least in part, the interaction between the CFIm and CPSF complexes and may be inhibited by CPSF6 hyper-phosphorylation. Interacts (preferentially via unphosphorylated form and Arg/Asp/Glu-rich domain) with CPSF7 (via Arg/Ser-rich domain); this interaction mediates, at least in part, the interaction between the CFIm and CPSF complexes and may be inhibited by CPSF7 hyper-phosphorylation.

Its subcellular location is the nucleus. Its function is as follows. Component of the cleavage and polyadenylation specificity factor (CPSF) complex that plays a key role in pre-mRNA 3'-end formation, recognizing the AAUAAA signal sequence and interacting with poly(A) polymerase and other factors to bring about cleavage and poly(A) addition. FIP1L1 contributes to poly(A) site recognition and stimulates poly(A) addition. Binds to U-rich RNA sequence elements surrounding the poly(A) site. May act to tether poly(A) polymerase to the CPSF complex. This Mus musculus (Mouse) protein is Pre-mRNA 3'-end-processing factor FIP1 (Fip1l1).